Reading from the N-terminus, the 354-residue chain is 3-isopropylmalate dehydrogenase (354 aa).

74–87 (GPKWDDLPPEKRPE) serves as a coordination point for NAD(+). Substrate is bound by residues Arg-95, Arg-105, Arg-134, and Asp-219. Residues Asp-219, Asp-243, and Asp-247 each coordinate Mg(2+). Residue 275 to 287 (GSAPDIAGKNIAN) participates in NAD(+) binding.

It belongs to the isocitrate and isopropylmalate dehydrogenases family. LeuB type 1 subfamily. In terms of assembly, homodimer. It depends on Mg(2+) as a cofactor. The cofactor is Mn(2+).

Its subcellular location is the cytoplasm. The catalysed reaction is (2R,3S)-3-isopropylmalate + NAD(+) = 4-methyl-2-oxopentanoate + CO2 + NADH. It participates in amino-acid biosynthesis; L-leucine biosynthesis; L-leucine from 3-methyl-2-oxobutanoate: step 3/4. Catalyzes the oxidation of 3-carboxy-2-hydroxy-4-methylpentanoate (3-isopropylmalate) to 3-carboxy-4-methyl-2-oxopentanoate. The product decarboxylates to 4-methyl-2 oxopentanoate. The sequence is that of 3-isopropylmalate dehydrogenase (leuB) from Thermotoga maritima (strain ATCC 43589 / DSM 3109 / JCM 10099 / NBRC 100826 / MSB8).